A 1637-amino-acid chain; its full sequence is Acrosomal protein KIAA1210 (1637 aa).

Disordered regions lie at residues 44-121 (RFSS…LSIS), 141-293 (RTTT…KNEW), 341-404 (PTTT…KKKD), 438-759 (VCGE…SQSE), 865-896 (PKLP…EGST), 935-975 (SKYS…FQPL), 1017-1057 (LQPW…IPSQ), 1090-1137 (FPFQ…SRRA), 1182-1238 (SQTI…SKSF), and 1539-1558 (NKGD…PAFS). A compositionally biased stretch (basic residues) spans 103–114 (HRSKSLKIKSQR). Over residues 141–156 (RTTTTFRRRSSQCSST) the composition is skewed to low complexity. Residues 170–190 (SESSTQQFSGFSTPATSQGCL) show a composition bias toward polar residues. The segment covering 229 to 249 (AKEKTTTKTKEAEQGEQKVDS) has biased composition (basic and acidic residues). Residues 250–261 (TELSSQEQSSKT) show a composition bias toward low complexity. The span at 341–353 (PTTTEAEVTTVQK) shows a compositional bias: polar residues. Residues 355 to 374 (PSDKGDVERELADIDVEAQK) show a composition bias toward basic and acidic residues. Residues 508 to 526 (TGETSSDSKSTSEYESSSE) show a composition bias toward low complexity. The segment covering 550–572 (ADDEEDGDDEKEEKDNDDDDEEN) has biased composition (acidic residues). Positions 689–698 (DLSSSEQEQQ) are enriched in low complexity. Polar residues-rich tracts occupy residues 745 to 759 (SPTQ…SQSE), 879 to 896 (GKQS…EGST), 935 to 956 (SKYS…STSA), 964 to 975 (SQPSVTPKFQPL), and 1017 to 1030 (LQPW…QVSV).

In terms of assembly, interacts with TOP2B. As to expression, predominantly expressed in testis (at protein level).

Its subcellular location is the cytoplasmic vesicle. It localises to the secretory vesicle. The protein resides in the acrosome. The protein is Acrosomal protein KIAA1210 of Mus musculus (Mouse).